Consider the following 336-residue polypeptide: NADH-quinone oxidoreductase subunit H (336 aa).

The next 8 membrane-spanning stretches (helical) occupy residues Ile-14 to Val-34, Ile-82 to Ile-102, Val-115 to Gly-135, Ile-161 to Val-181, Thr-186 to Ala-206, Ile-247 to Val-267, Val-273 to Val-293, and Val-312 to Asp-332.

It belongs to the complex I subunit 1 family. NDH-1 is composed of 14 different subunits. Subunits NuoA, H, J, K, L, M, N constitute the membrane sector of the complex.

It localises to the cell inner membrane. It catalyses the reaction a quinone + NADH + 5 H(+)(in) = a quinol + NAD(+) + 4 H(+)(out). In terms of biological role, NDH-1 shuttles electrons from NADH, via FMN and iron-sulfur (Fe-S) centers, to quinones in the respiratory chain. The immediate electron acceptor for the enzyme in this species is believed to be ubiquinone. Couples the redox reaction to proton translocation (for every two electrons transferred, four hydrogen ions are translocated across the cytoplasmic membrane), and thus conserves the redox energy in a proton gradient. This subunit may bind ubiquinone. This is NADH-quinone oxidoreductase subunit H from Rhodospirillum centenum (strain ATCC 51521 / SW).